The following is a 210-amino-acid chain: Small ribosomal subunit protein uS4 (210 aa).

An S4 RNA-binding domain is found at 100–160 (GRLDNVVYRM…EKSKNQLRVK (61 aa)).

This sequence belongs to the universal ribosomal protein uS4 family. As to quaternary structure, part of the 30S ribosomal subunit. Contacts protein S5. The interaction surface between S4 and S5 is involved in control of translational fidelity.

One of the primary rRNA binding proteins, it binds directly to 16S rRNA where it nucleates assembly of the body of the 30S subunit. Its function is as follows. With S5 and S12 plays an important role in translational accuracy. In Alcanivorax borkumensis (strain ATCC 700651 / DSM 11573 / NCIMB 13689 / SK2), this protein is Small ribosomal subunit protein uS4.